Here is a 122-residue protein sequence, read N- to C-terminus: Large ribosomal subunit protein uL14 (122 aa).

The protein belongs to the universal ribosomal protein uL14 family. As to quaternary structure, part of the 50S ribosomal subunit. Forms a cluster with proteins L3 and L19. In the 70S ribosome, L14 and L19 interact and together make contacts with the 16S rRNA in bridges B5 and B8.

In terms of biological role, binds to 23S rRNA. Forms part of two intersubunit bridges in the 70S ribosome. This is Large ribosomal subunit protein uL14 from Gloeothece citriformis (strain PCC 7424) (Cyanothece sp. (strain PCC 7424)).